Reading from the N-terminus, the 565-residue chain is SRSF protein kinase 3 (565 aa).

Residues 1–44 form a disordered region; it reads MSANAGGSGSVDCGGSSSSSQTSCGPESSGSELTPATPAPRLLQ. Over residues 10-31 the composition is skewed to low complexity; that stretch reads SVDCGGSSSSSQTSCGPESSGS. S49 is modified (phosphoserine). Residues 78–563 form the Protein kinase domain; that stretch reads YHVVRKLGWG…AADCLQHPWL (486 aa). ATP-binding positions include 84 to 92 and K107; that span reads LGWGHFSTV. Residue D211 is the Proton acceptor of the active site. Over residues 236–253 the composition is skewed to polar residues; the sequence is WQQSGAQPPSRSTVSTAP. Disordered regions lie at residues 236-280 and 295-350; these read WQQS…KRLL and AAVQ…QTSG. Residues 262-277 are compositionally biased toward basic residues; that stretch reads SKNKRKKMRRKRKQQK. A compositionally biased stretch (low complexity) spans 325–350; that stretch reads AGPSPASSSPVPGGERSLSPSSQTSG. Phosphoserine is present on S328.

The protein belongs to the protein kinase superfamily. CMGC Ser/Thr protein kinase family. Exclusively expressed in skeletal and heart muscle.

The protein resides in the nucleus. It localises to the cytoplasm. It catalyses the reaction L-seryl-[protein] + ATP = O-phospho-L-seryl-[protein] + ADP + H(+). The catalysed reaction is L-threonyl-[protein] + ATP = O-phospho-L-threonyl-[protein] + ADP + H(+). Its function is as follows. Serine/arginine-rich protein-specific kinase which specifically phosphorylates its substrates at serine residues located in regions rich in arginine/serine dipeptides, known as RS domains. Phosphorylates the SR splicing factor SRSF1 and the lamin-B receptor (LBR) in vitro. Required for normal muscle development. This is SRSF protein kinase 3 (Srpk3) from Mus musculus (Mouse).